Consider the following 469-residue polypeptide: Probable glycine dehydrogenase (decarboxylating) subunit 1 (469 aa).

Belongs to the GcvP family. N-terminal subunit subfamily. As to quaternary structure, the glycine cleavage system is composed of four proteins: P, T, L and H. In this organism, the P 'protein' is a heterodimer of two subunits.

It carries out the reaction N(6)-[(R)-lipoyl]-L-lysyl-[glycine-cleavage complex H protein] + glycine + H(+) = N(6)-[(R)-S(8)-aminomethyldihydrolipoyl]-L-lysyl-[glycine-cleavage complex H protein] + CO2. The glycine cleavage system catalyzes the degradation of glycine. The P protein binds the alpha-amino group of glycine through its pyridoxal phosphate cofactor; CO(2) is released and the remaining methylamine moiety is then transferred to the lipoamide cofactor of the H protein. This Staphylothermus marinus (strain ATCC 43588 / DSM 3639 / JCM 9404 / F1) protein is Probable glycine dehydrogenase (decarboxylating) subunit 1.